Consider the following 229-residue polypeptide: Cytidylate kinase (229 aa).

12–20 (GPSGAGKGT) is a binding site for ATP.

This sequence belongs to the cytidylate kinase family. Type 1 subfamily.

The protein localises to the cytoplasm. The catalysed reaction is CMP + ATP = CDP + ADP. It carries out the reaction dCMP + ATP = dCDP + ADP. The chain is Cytidylate kinase from Pseudomonas aeruginosa (strain LESB58).